The chain runs to 83 residues: Cytochrome b559 subunit alpha (83 aa).

A helical membrane pass occupies residues 21–35 (VIHSITIPSLFIAGW). H23 contributes to the heme binding site.

Belongs to the PsbE/PsbF family. As to quaternary structure, heterodimer of an alpha subunit and a beta subunit. PSII is composed of 1 copy each of membrane proteins PsbA, PsbB, PsbC, PsbD, PsbE, PsbF, PsbH, PsbI, PsbJ, PsbK, PsbL, PsbM, PsbT, PsbX, PsbY, PsbZ, Psb30/Ycf12, at least 3 peripheral proteins of the oxygen-evolving complex and a large number of cofactors. It forms dimeric complexes. The cofactor is heme b.

It localises to the plastid. Its subcellular location is the chloroplast thylakoid membrane. Its function is as follows. This b-type cytochrome is tightly associated with the reaction center of photosystem II (PSII). PSII is a light-driven water:plastoquinone oxidoreductase that uses light energy to abstract electrons from H(2)O, generating O(2) and a proton gradient subsequently used for ATP formation. It consists of a core antenna complex that captures photons, and an electron transfer chain that converts photonic excitation into a charge separation. In Ginkgo biloba (Ginkgo), this protein is Cytochrome b559 subunit alpha.